The chain runs to 423 residues: Histidine--tRNA ligase (423 aa).

It belongs to the class-II aminoacyl-tRNA synthetase family. In terms of assembly, homodimer.

It localises to the cytoplasm. The enzyme catalyses tRNA(His) + L-histidine + ATP = L-histidyl-tRNA(His) + AMP + diphosphate + H(+). The chain is Histidine--tRNA ligase from Actinobacillus succinogenes (strain ATCC 55618 / DSM 22257 / CCUG 43843 / 130Z).